Consider the following 185-residue polypeptide: Elongation factor P (185 aa).

This sequence belongs to the elongation factor P family.

The protein resides in the cytoplasm. Its pathway is protein biosynthesis; polypeptide chain elongation. Its function is as follows. Involved in peptide bond synthesis. Stimulates efficient translation and peptide-bond synthesis on native or reconstituted 70S ribosomes in vitro. Probably functions indirectly by altering the affinity of the ribosome for aminoacyl-tRNA, thus increasing their reactivity as acceptors for peptidyl transferase. The chain is Elongation factor P from Picosynechococcus sp. (strain ATCC 27264 / PCC 7002 / PR-6) (Agmenellum quadruplicatum).